We begin with the raw amino-acid sequence, 177 residues long: MKTIEVDEDLYRYIASQTLHIGESASDILRRLLNVDGELATAAPAAEPKGIVVSKDAAFDTKIDGVKAMRSLLISDEFAGLKNAIDRFMLILSTLHRIDSASFSEATMFKGRKRVYFADNEQTLLASGQTTKPKAIPNTPFWVITNNNTSRKQQMVEQVMVRMGFPSDIIEKVTHSI.

Belongs to the SeqA family. In terms of assembly, homodimer. Polymerizes to form helical filaments.

It localises to the cytoplasm. In terms of biological role, negative regulator of replication initiation, which contributes to regulation of DNA replication and ensures that replication initiation occurs exactly once per chromosome per cell cycle. Binds to pairs of hemimethylated GATC sequences in the oriC region, thus preventing assembly of replication proteins and re-initiation at newly replicated origins. Repression is relieved when the region becomes fully methylated. The polypeptide is Negative modulator of initiation of replication (Vibrio cholerae serotype O1 (strain ATCC 39315 / El Tor Inaba N16961)).